The primary structure comprises 238 residues: Cysteine-rich venom protein (238 aa).

Positions 1-19 (MIAFIVLLSLAAVLQQSSG) are cleaved as a signal peptide. An SCP domain is found at 38 to 164 (VDKHNALRRS…STKYLYVCQY (127 aa)). Cystine bridges form between cysteine 75-cysteine 153, cysteine 92-cysteine 165, cysteine 148-cysteine 162, cysteine 184-cysteine 191, cysteine 187-cysteine 196, cysteine 200-cysteine 233, cysteine 209-cysteine 227, and cysteine 218-cysteine 231. The ShKT domain maps to 200-233 (CKYEDAFTNCKALAKKTKCKTEWIKSKCPATCFC).

It belongs to the CRISP family. As to expression, expressed by the venom gland.

Its subcellular location is the secreted. Blocks contraction of smooth muscle elicited by high potassium-induced depolarization, but does not block caffeine-stimulated contraction. May target voltage-gated calcium channels on smooth muscle. The polypeptide is Cysteine-rich venom protein (Austrelaps superbus (Lowland copperhead snake)).